We begin with the raw amino-acid sequence, 239 residues long: Leucine rich adaptor protein 1 (239 aa).

LRR repeat units follow at residues 55 to 83 (LGDKIMALRMELAYLRAIDVKILQQLVTL) and 93 to 114 (LLEERGTLTSHCSSLTSSQYSL). Residues 105-116 (SSLTSSQYSLTG) show a composition bias toward low complexity. Positions 105–138 (SSLTSSQYSLTGGSPGRSRRGSWDSLPDTSSTDR) are disordered. Ser-118, Ser-126, and Ser-129 each carry phosphoserine.

In terms of assembly, forms a tripartite complex with CDC42BPA/CDC42BPB and MYO18A acting as an adapter connecting both. Its binding to CDC42BPA/CDC42BPB results in their activation by abolition of their negative autoregulation. Interacts with CDC42BPA and CDC42BPB. In terms of processing, phosphorylated.

Its subcellular location is the cytoplasm. Acts as an activator of the canonical NF-kappa-B pathway and drive the production of pro-inflammatory cytokines. Promotes the antigen (Ag)-presenting and priming function of dendritic cells via the canonical NF-kappa-B pathway. In concert with MYO18A and CDC42BPA/CDC42BPB, is involved in modulating lamellar actomyosin retrograde flow that is crucial to cell protrusion and migration. Activates CDC42BPA/CDC42BPB and targets it to actomyosin through its interaction with MYO18A, leading to MYL9/MLC2 phosphorylation and MYH9/MYH10-dependent actomyosin assembly in the lamella. In Mus musculus (Mouse), this protein is Leucine rich adaptor protein 1 (Lurap1).